A 106-amino-acid chain; its full sequence is ATP-dependent Clp protease adapter protein ClpS (106 aa).

It belongs to the ClpS family. In terms of assembly, binds to the N-terminal domain of the chaperone ClpA.

Its function is as follows. Involved in the modulation of the specificity of the ClpAP-mediated ATP-dependent protein degradation. This chain is ATP-dependent Clp protease adapter protein ClpS, found in Erwinia tasmaniensis (strain DSM 17950 / CFBP 7177 / CIP 109463 / NCPPB 4357 / Et1/99).